Here is a 388-residue protein sequence, read N- to C-terminus: Xylose isomerase (388 aa).

Catalysis depends on residues His54 and Asp57. Residues Glu181, Glu217, His220, Asp245, Asp255, Asp257, and Asp287 each coordinate Mg(2+).

It belongs to the xylose isomerase family. Homotetramer. Mg(2+) serves as cofactor.

It is found in the cytoplasm. The catalysed reaction is alpha-D-xylose = alpha-D-xylulofuranose. Its function is as follows. Involved in D-xylose catabolism. The protein is Xylose isomerase (xylA) of Streptomyces rubiginosus.